The sequence spans 119 residues: MQAKAILRHTPTSPRKMRLVAGLVRGKAVDQAKAILLNSTKAASRNALQTLKSAVANYAQLNPDERVGDQELFVKSVFVDEGATLKRMLPAPMGRAYRVRKRSNHLTIVVDRVKNPETK.

This sequence belongs to the universal ribosomal protein uL22 family. Part of the 50S ribosomal subunit.

This protein binds specifically to 23S rRNA; its binding is stimulated by other ribosomal proteins, e.g. L4, L17, and L20. It is important during the early stages of 50S assembly. It makes multiple contacts with different domains of the 23S rRNA in the assembled 50S subunit and ribosome. In terms of biological role, the globular domain of the protein is located near the polypeptide exit tunnel on the outside of the subunit, while an extended beta-hairpin is found that lines the wall of the exit tunnel in the center of the 70S ribosome. In Chlorobium phaeovibrioides (strain DSM 265 / 1930) (Prosthecochloris vibrioformis (strain DSM 265)), this protein is Large ribosomal subunit protein uL22.